A 1557-amino-acid chain; its full sequence is Ras guanine nucleotide exchange factor K (1557 aa).

Residues 1 to 16 are compositionally biased toward pro residues; sequence MEPTINPPVNLPPPVP. 6 disordered regions span residues 1–121, 146–181, 195–238, 283–347, 558–619, and 881–937; these read MEPT…SYTV, VETLSSSSPSPIKTTTTPPPPVPSKSKSKSSEKLSV, LYQQ…SPQL, SPLP…GLTP, NNNN…DELS, and TNNN…QVNH. Low complexity-rich tracts occupy residues 17 to 40, 52 to 63, 73 to 90, 102 to 114, 148 to 161, 195 to 207, and 222 to 236; these read SRSNLSLNYSNNNTNNTNNTNNTN, SSPSSPSSPSPS, NNNNNNNNNNNHINNGNV, ISSPQSSPIHTSS, TLSSSSPSPIKTTT, LYQQQQQQSNPNS, and PPSSSSSSTTPSTSP. Positions 283–310 are enriched in pro residues; sequence SPLPPPPLTIPNKVPPLPMRLPPPPPPQ. 2 coiled-coil regions span residues 310–338 and 591–629; these read QQLDQMYSNNNQQQQQQQQQQQNNESNST and NNNNNNNNNNNNNNNNNNNNLHQQQDELSSSIQLEEEEL. Residues 311–333 show a composition bias toward low complexity; it reads QLDQMYSNNNQQQQQQQQQQQNN. Positions 334-343 are enriched in polar residues; it reads ESNSTTTSEG. Composition is skewed to low complexity over residues 558 to 610 and 881 to 928; these read NNNN…NNNN and TNNN…TPTT. The region spanning 1058–1177 is the N-terminal Ras-GEF domain; the sequence is LNAEIDAATL…QIRNCILKRT (120 aa). Residues 1254-1303 form a disordered region; that stretch reads PSISQNTPSSPSLIPSSPRPITSSSSVSSSTLLKSPLSQQAKSRIPETKT. Residues 1261 to 1291 show a composition bias toward low complexity; sequence PSSPSLIPSSPRPITSSSSVSSSTLLKSPLS. The 234-residue stretch at 1316–1549 folds into the Ras-GEF domain; it reads DDEEIARQLT…YHLSLLKEPR (234 aa).

Promotes the exchange of Ras-bound GDP by GTP. In Dictyostelium discoideum (Social amoeba), this protein is Ras guanine nucleotide exchange factor K (gefK).